A 299-amino-acid chain; its full sequence is Bifunctional protein FolD (299 aa).

NADP(+)-binding positions include G166–S168, S191, and I232.

This sequence belongs to the tetrahydrofolate dehydrogenase/cyclohydrolase family. Homodimer.

It catalyses the reaction (6R)-5,10-methylene-5,6,7,8-tetrahydrofolate + NADP(+) = (6R)-5,10-methenyltetrahydrofolate + NADPH. It carries out the reaction (6R)-5,10-methenyltetrahydrofolate + H2O = (6R)-10-formyltetrahydrofolate + H(+). It participates in one-carbon metabolism; tetrahydrofolate interconversion. In terms of biological role, catalyzes the oxidation of 5,10-methylenetetrahydrofolate to 5,10-methenyltetrahydrofolate and then the hydrolysis of 5,10-methenyltetrahydrofolate to 10-formyltetrahydrofolate. The polypeptide is Bifunctional protein FolD (Anaplasma marginale (strain St. Maries)).